Reading from the N-terminus, the 100-residue chain is Urease subunit gamma (100 aa).

It belongs to the urease gamma subunit family. Heterotrimer of UreA (gamma), UreB (beta) and UreC (alpha) subunits. Three heterotrimers associate to form the active enzyme.

The protein resides in the cytoplasm. It carries out the reaction urea + 2 H2O + H(+) = hydrogencarbonate + 2 NH4(+). It participates in nitrogen metabolism; urea degradation; CO(2) and NH(3) from urea (urease route): step 1/1. The protein is Urease subunit gamma of Alcanivorax borkumensis (strain ATCC 700651 / DSM 11573 / NCIMB 13689 / SK2).